The chain runs to 397 residues: DNA-directed RNA polymerase subunit Rpo1C (397 aa).

This sequence belongs to the RNA polymerase beta' chain family. As to quaternary structure, part of the RNA polymerase complex.

The protein localises to the cytoplasm. The enzyme catalyses RNA(n) + a ribonucleoside 5'-triphosphate = RNA(n+1) + diphosphate. Its function is as follows. DNA-dependent RNA polymerase (RNAP) catalyzes the transcription of DNA into RNA using the four ribonucleoside triphosphates as substrates. Forms part of the jaw domain. The sequence is that of DNA-directed RNA polymerase subunit Rpo1C from Pyrococcus abyssi (strain GE5 / Orsay).